The primary structure comprises 723 residues: Cyclin-T2 (723 aa).

The tract at residues M1–S298 is interaction with MDFIC and MDFI. Positions F12 to I147 constitute a Cyclin N-terminal domain. The segment at R250 to S298 is interaction with POLR2A. Composition is skewed to polar residues over residues P297 to F307 and N314 to A325. Disordered regions lie at residues P297–A325, S340–Q364, A385–P428, and A458–K645. Over residues D395 to H409 the composition is skewed to basic and acidic residues. A Glycyl lysine isopeptide (Lys-Gly) (interchain with G-Cter in SUMO2) cross-link involves residue K404. S477 carries the post-translational modification Phosphoserine. Composition is skewed to basic and acidic residues over residues D489–G503, G517–G543, and I552–A565. Residues N566 to H576 show a composition bias toward basic residues. S596 bears the Phosphoserine mark. Positions S631–K645 are enriched in low complexity.

The protein belongs to the cyclin family. Cyclin C subfamily. As to quaternary structure, interacts with CDK9 to form P-TEFb. Interacts with POLR2A (via the C-terminal domain (CTD)); mediates transcriptional activity. Interacts with HEXIM1; mediates formation of a tripartite complex with KPNA2. Interacts with HEXIM2. Interacts with PKN1; enhances MYOD1-dependent transcription. P-TEFB complex interacts with RB1; promotes phosphorylation of RB1. P-TEFB complex interacts with MYOD1; promotes the transcriptional activity of MYOD1 through its CDK9-mediated phosphorylation. Interacts with MDFI and MDFIC. As to expression, highly expressed in all phases of skeletal muscle differentiation, particularly in later stages. Highly expressed in skeletal muscle. Significantly expressed in heart, brain, kidney, liver, testis, and pancreas.

The protein resides in the cytoplasm. It is found in the perinuclear region. The protein localises to the nucleus. Functionally, regulatory subunit of the cyclin-dependent kinase pair (CDK9/cyclin T) complex, also called positive transcription elongation factor B (P-TEFB), which is proposed to facilitate the transition from abortive to production elongation by phosphorylating the CTD (carboxy-terminal domain) of the large subunit of RNA polymerase II (RNAP II). The activity of this complex is regulated by binding with 7SK snRNA. Plays a role during muscle differentiation; P-TEFB complex interacts with MYOD1; this tripartite complex promotes the transcriptional activity of MYOD1 through its CDK9-mediated phosphorylation and binds the chromatin of promoters and enhancers of muscle-specific genes; this event correlates with hyperphosphorylation of the CTD domain of RNA pol II. In addition, enhances MYOD1-dependent transcription through interaction with PKN1. Involved in early embryo development. This chain is Cyclin-T2, found in Mus musculus (Mouse).